Consider the following 390-residue polypeptide: Zinc transporter 7 (390 aa).

The Cytoplasmic segment spans residues 1-37 (MLPLSIKDDEYKPPKFNLVRKVSGWIRSIFSDTTSRN). A helical transmembrane segment spans residues 38–58 (LFCFLCLNLSFAFVELFYGIW). Topologically, residues 59–67 (SNSLGLISD) are lumenal. A helical membrane pass occupies residues 68-88 (SFHMFFDCTALLAGLAASVIS). The Cytoplasmic segment spans residues 89–102 (RWKTNEAFSYGYVR). The helical transmembrane segment at 103–123 (AEVLAGFVNGLFLIFTAFFIF) threads the bilayer. Topologically, residues 124 to 140 (SEGIERALDTPEVHHER) are lumenal. A helical membrane pass occupies residues 141 to 161 (LLPVSILGFLVNLIGIFVFQH). Residues 161-226 (HGGGHGHSHE…SHDQSHKHGH (66 aa)) form a his-rich loop region. Over 162–250 (GGGHGHSHES…TGSSKQILEG (89 aa)) the chain is Cytoplasmic. Residues 167–243 (HSHESGHGHS…DEPPEEHTGS (77 aa)) form a disordered region. Over residues 177-186 (HSLFNGSLSH) the composition is skewed to low complexity. Positions 187 to 208 (GHSHSHGGSHGHSHGGGHGHSH) are enriched in basic residues. 2 stretches are compositionally biased toward basic and acidic residues: residues 209 to 222 (SHGE…DQSH) and 232 to 242 (CHDEPPEEHTG). A helical membrane pass occupies residues 251 to 271 (VFLHIVADALGSVGVIISTIL). At 272-276 (MQRYG) the chain is on the lumenal side. Residues 277–297 (LMIADPICSMLIALLIFVSVI) form a helical membrane-spanning segment. Residues 298–390 (PLLKQSIGIL…LYVQIDMAAM (93 aa)) are Cytoplasmic-facing.

It belongs to the cation diffusion facilitator (CDF) transporter (TC 2.A.4) family. SLC30A subfamily. Homooligomer.

It localises to the golgi apparatus membrane. The protein resides in the cytoplasmic vesicle. It is found in the golgi apparatus. The protein localises to the trans-Golgi network. Its subcellular location is the sarcoplasmic reticulum. It localises to the mitochondrion. The enzyme catalyses Zn(2+)(in) = Zn(2+)(out). Zinc ion transporter mediating zinc entry from the cytosol into the lumen of organelles along the secretory pathway. By contributing to zinc ion homeostasis within the early secretory pathway, regulates the activation and folding of enzymes like alkaline phosphatases. This chain is Zinc transporter 7 (slc30a7), found in Xenopus tropicalis (Western clawed frog).